Here is a 198-residue protein sequence, read N- to C-terminus: Protein GrpE (198 aa).

This sequence belongs to the GrpE family. Homodimer.

The protein resides in the cytoplasm. Functionally, participates actively in the response to hyperosmotic and heat shock by preventing the aggregation of stress-denatured proteins, in association with DnaK and GrpE. It is the nucleotide exchange factor for DnaK and may function as a thermosensor. Unfolded proteins bind initially to DnaJ; upon interaction with the DnaJ-bound protein, DnaK hydrolyzes its bound ATP, resulting in the formation of a stable complex. GrpE releases ADP from DnaK; ATP binding to DnaK triggers the release of the substrate protein, thus completing the reaction cycle. Several rounds of ATP-dependent interactions between DnaJ, DnaK and GrpE are required for fully efficient folding. The chain is Protein GrpE from Actinobacillus pleuropneumoniae serotype 7 (strain AP76).